The following is a 90-amino-acid chain: Non-structural protein NS-S (90 aa).

The protein belongs to the hantavirus NS-S protein family.

It is found in the host cytoplasm. It localises to the host perinuclear region. Its function is as follows. Antagonizes host type-I IFN signaling pathway. The polypeptide is Non-structural protein NS-S (N) (Homo sapiens (Human)).